The primary structure comprises 785 residues: Conserved oligomeric Golgi complex subunit 4 (785 aa).

The segment at 1-24 (MADFDSPPKLSGVQPPSEGVGGGR) is disordered. An N-acetylalanine modification is found at alanine 2. The tract at residues 2–84 (ADFDSPPKLS…VTLHRMGPNL (83 aa)) is interaction with SCFD1. Serine 6 bears the Phosphoserine mark. Residues 85–153 (QLIEGDAKQL…TALRNEDYEQ (69 aa)) form an interaction with STX5 region. Residues 618–740 (PQVQPWINSF…SQMATILNLE (123 aa)) form a d domain region. The segment at 741–785 (RVTEILDYWGPNSGPLTWRLTPAEVRQVLALRIDFRSEDIKRLRL) is e domain; essential for proper cell surface glycosylation.

It belongs to the COG4 family. In terms of assembly, monomer. Component of the conserved oligomeric Golgi (COG) complex which is composed of eight different subunits and is required for normal Golgi morphology and localization. Mediates interaction of SCFD1 with the COG complex. Interacts with STX5.

The protein localises to the cytoplasm. It localises to the cytosol. Its subcellular location is the golgi apparatus membrane. In terms of biological role, required for normal Golgi function. Plays a role in SNARE-pin assembly and Golgi-to-ER retrograde transport via its interaction with SCFD1. The polypeptide is Conserved oligomeric Golgi complex subunit 4 (COG4) (Pongo abelii (Sumatran orangutan)).